Reading from the N-terminus, the 376-residue chain is Homocitrate synthase (376 aa).

The 256-residue stretch at 4-259 (WKIIDSTLRE…RRKYKLEMLP (256 aa)) folds into the Pyruvate carboxyltransferase domain. Residue arginine 12 coordinates 2-oxoglutarate. Mg(2+) is bound at residue glutamate 13. Histidine 72 is a 2-oxoglutarate binding site. L-lysine is bound at residue aspartate 92. Residue arginine 133 participates in 2-oxoglutarate binding. Residues serine 135 and threonine 166 each coordinate L-lysine. Residue threonine 166 participates in 2-oxoglutarate binding. Residues histidine 195 and histidine 197 each contribute to the Mg(2+) site. The active-site Proton acceptor is the histidine 292.

The protein belongs to the alpha-IPM synthase/homocitrate synthase family. Homocitrate synthase LYS20/LYS21 subfamily. As to quaternary structure, exists in an equilibrium between monomer and homodimer. Mg(2+) serves as cofactor. The cofactor is Mn(2+).

It localises to the cytoplasm. The catalysed reaction is acetyl-CoA + 2-oxoglutarate + H2O = (2R)-homocitrate + CoA + H(+). It catalyses the reaction oxaloacetate + acetyl-CoA + H2O = citrate + CoA + H(+). It participates in amino-acid biosynthesis; L-lysine biosynthesis via AAA pathway; L-alpha-aminoadipate from 2-oxoglutarate: step 1/5. Its activity is regulated as follows. Is highly and competitively inhibited by lysine that binds to the active site and competes with 2-oxoglutarate. Is also slightly inhibited by arginine and 2-aminoethylcysteine. Its function is as follows. Catalyzes the aldol-type condensation of 2-oxoglutarate with acetyl-CoA to yield homocitrate. Carries out the first step of the alpha-aminoadipate (AAA) lysine biosynthesis pathway. To a lesser extent, can also use oxaloacetate in place of 2-oxoglutarate, leading to citrate. Does not display 2-isopropylmalate synthase activity since it cannot use 2-oxoisovalerate. This is Homocitrate synthase from Thermus thermophilus (strain ATCC BAA-163 / DSM 7039 / HB27).